The following is a 239-amino-acid chain: 1-(5-phosphoribosyl)-5-[(5-phosphoribosylamino)methylideneamino] imidazole-4-carboxamide isomerase (239 aa).

Residue D8 is the Proton acceptor of the active site. The active-site Proton donor is the D129.

This sequence belongs to the HisA/HisF family.

It localises to the cytoplasm. The catalysed reaction is 1-(5-phospho-beta-D-ribosyl)-5-[(5-phospho-beta-D-ribosylamino)methylideneamino]imidazole-4-carboxamide = 5-[(5-phospho-1-deoxy-D-ribulos-1-ylimino)methylamino]-1-(5-phospho-beta-D-ribosyl)imidazole-4-carboxamide. Its pathway is amino-acid biosynthesis; L-histidine biosynthesis; L-histidine from 5-phospho-alpha-D-ribose 1-diphosphate: step 4/9. The chain is 1-(5-phosphoribosyl)-5-[(5-phosphoribosylamino)methylideneamino] imidazole-4-carboxamide isomerase from Bacillus mycoides (strain KBAB4) (Bacillus weihenstephanensis).